Consider the following 421-residue polypeptide: Transcription factor IIIB 50 kDa subunit (421 aa).

The TFIIB-type zinc-finger motif lies at 2–36; the sequence is PGRGRCPDCGSAELVEDSHYSQNQLVCSDCGCVVT. 4 residues coordinate Zn(2+): cysteine 7, cysteine 10, cysteine 28, and cysteine 31. 2 repeat units span residues 72 to 157 and 173 to 249. Positions 108–114 are interaction with target DNA; the sequence is TARLQKK. The interval 325–357 is disordered; that stretch reads ELQGQGQGQGLGDEDVGSSSLELPAGKRPSSPA. At serine 355 the chain carries Phosphoserine. Residues 359–365 are required for the formation of a ternary complex with DNA and TBP; not required for interaction with TBP in the absence of DNA; sequence LLPPCML. Residue cysteine 363 is modified to Cysteine sulfenic acid (-SOH). The segment at 367 to 421 is required for interaction with TBP and formation of a ternary complex with DNA and TBP; that stretch reads PPKRVCPAPPVSMVTGDEDISDSEIEQYLRTPQEVRDFQKAQAARQAAQGTPNPP.

This sequence belongs to the TFIIB family. In terms of assembly, component of TFIIIB complexes. The TFIIIB complex has two activities, alpha and beta. The TFIIIB-alpha activity complex is composed of TBP, BDP1, and a complex containing both BRF2 and at least four stably associated proteins; this complex inhibits the transcription by pol III via its phosphorylation by CK2; YY1 facilitates the TFIIIB-alpha complex formation. Interacts with TBP; this interaction promotes recruitment of BRF2 to TATA box-containing promoters. Interacts with TBP and the BURE sequence (GC-rich sequence downstream from the TATA box) to form a strong ternary complex which is joined by BDP1; this ternary complex stimulates pol III transcription. Forms a trimeric complex composed of TBP, BRF2 and mini-SNAPc complex (SNAP43, SNAP50, and the N-terminal third of SNAP190) on the promoter. Assembly of the TBP-BRF2 complex is stimulated by SNAP190. Interacts with MAF1 and SNAPC4. In terms of processing, in response to oxidative stress, Cys-363 is reversibly oxidized to cysteine sulfenic acid. Oxidation of Cys-363 impairs formation of a ternary complex with TBP and DNA and down-regulates expression of target genes in response to oxidative stress.

Its subcellular location is the nucleus. General activator of RNA polymerase III transcription. Factor exclusively required for RNA polymerase III transcription of genes with promoter elements upstream of the initiation sites. Contributes to the regulation of gene expression; functions as activator in the absence of oxidative stress. Down-regulates expression of target genes in response to oxidative stress. Overexpression protects cells against apoptosis in response to oxidative stress. This is Transcription factor IIIB 50 kDa subunit (BRF2) from Bos taurus (Bovine).